The chain runs to 217 residues: Putative oxidative stress regulator AosR (217 aa).

The CXXXC motif lies at 5–9; the sequence is CGRRC. Cysteine 5 and cysteine 9 are oxidised to a cystine.

This sequence belongs to the AosR family.

The protein is Putative oxidative stress regulator AosR of Mycobacterium leprae (strain TN).